The chain runs to 808 residues: Bifunctional uridylyltransferase/uridylyl-removing enzyme (808 aa).

Residues 1-315 (MEAESPCAAS…ALVRRPKRRP (315 aa)) are uridylyltransferase. The segment at 316-609 (LDEGVVEYAG…EISPRDGERI (294 aa)) is uridylyl-removing. The region spanning 430–544 (VDRHVVETAV…LEVLHALSEA (115 aa)) is the HD domain. ACT domains are found at residues 610 to 686 (DAVI…GMLQ) and 730 to 805 (ILEV…VDEP).

The protein belongs to the GlnD family. Requires Mg(2+) as cofactor.

It carries out the reaction [protein-PII]-L-tyrosine + UTP = [protein-PII]-uridylyl-L-tyrosine + diphosphate. The enzyme catalyses [protein-PII]-uridylyl-L-tyrosine + H2O = [protein-PII]-L-tyrosine + UMP + H(+). Its function is as follows. Modifies, by uridylylation and deuridylylation, the PII regulatory protein (GlnB), in response to the nitrogen status of the cell that GlnD senses through the glutamine level. Under low glutamine levels, catalyzes the conversion of the PII protein and UTP to PII-UMP and PPi, while under higher glutamine levels, GlnD hydrolyzes PII-UMP to PII and UMP (deuridylylation). Thus, controls uridylylation state and activity of the PII protein, and plays an important role in the regulation of nitrogen assimilation and metabolism. This chain is Bifunctional uridylyltransferase/uridylyl-removing enzyme, found in Mycobacterium tuberculosis (strain CDC 1551 / Oshkosh).